Reading from the N-terminus, the 77-residue chain is Liver-expressed antimicrobial peptide 2 (77 aa).

A signal peptide spans 1–22 (MWHLKLCAVLMIFLLLLGQTDG). Residues 23–37 (SPIPEVSSAKRRPRR) constitute a propeptide that is removed on maturation. 2 disulfide bridges follow: Cys-54-Cys-65 and Cys-60-Cys-70.

It belongs to the LEAP2 family.

It is found in the secreted. Its function is as follows. Has an antimicrobial activity. The polypeptide is Liver-expressed antimicrobial peptide 2 (LEAP2) (Macaca mulatta (Rhesus macaque)).